Consider the following 171-residue polypeptide: ATP synthase subunit b (171 aa).

The chain crosses the membrane as a helical span at residues 2-22; that stretch reads FLVKMVLGFLILLSPLCATGL.

This sequence belongs to the ATPase B chain family. In terms of assembly, F-type ATPases have 2 components, F(1) - the catalytic core - and F(0) - the membrane proton channel. F(1) has five subunits: alpha(3), beta(3), gamma(1), delta(1), epsilon(1). F(0) has three main subunits: a(1), b(2) and c(10-14). The alpha and beta chains form an alternating ring which encloses part of the gamma chain. F(1) is attached to F(0) by a central stalk formed by the gamma and epsilon chains, while a peripheral stalk is formed by the delta and b chains.

Its subcellular location is the cell inner membrane. F(1)F(0) ATP synthase produces ATP from ADP in the presence of a proton or sodium gradient. F-type ATPases consist of two structural domains, F(1) containing the extramembraneous catalytic core and F(0) containing the membrane proton channel, linked together by a central stalk and a peripheral stalk. During catalysis, ATP synthesis in the catalytic domain of F(1) is coupled via a rotary mechanism of the central stalk subunits to proton translocation. Functionally, component of the F(0) channel, it forms part of the peripheral stalk, linking F(1) to F(0). This Helicobacter pylori (strain HPAG1) protein is ATP synthase subunit b.